A 147-amino-acid polypeptide reads, in one-letter code: Angiogenin (147 aa).

A signal peptide spans 1-24 (MVMGLGVLLLVFVLGLGLTPPTLA). The residue at position 25 (glutamine 25) is a Pyrrolidone carboxylic acid. The Proton acceptor role is filled by histidine 37. Residues arginine 45 and aspartate 46 each contribute to the tRNA site. Intrachain disulfides connect cysteine 50–cysteine 105, cysteine 63–cysteine 116, and cysteine 81–cysteine 131. Positions 55-59 (RRRGL) match the Nucleolar localization signal motif. TRNA is bound by residues cysteine 105 and valine 127. Histidine 138 serves as the catalytic Proton donor.

The protein belongs to the pancreatic ribonuclease family. Homodimer. Interacts with RNH1; inhibiting ANG ribonuclease activity. Interacts with PCNA.

It localises to the secreted. Its subcellular location is the nucleus. The protein localises to the nucleolus. The protein resides in the cytoplasm. It is found in the stress granule. Has weak tRNA ribonuclease activity by itself due to partial autoinhibition by its C-terminus, which folds into a short alpha-helix that partially occludes the substrate-binding site. In absence of stress, the ribonuclease activity is inhibited by RNH1 in the cytoplasm. In response to stress, dissociates from RNH1 in the cytoplasm and associates with cytoplasmic ribosomes with vacant A-sites: ribosomes directly activate the tRNA ribonuclease activity of ANG by refolding the C-terminal alpha-helix. In response to stress, the angiogenic activity of ANG is inhibited by RNH1 in the nucleus. In terms of biological role, secreted ribonuclease that can either promote or restrict cell proliferation of target cells, depending on the context. Endocytosed in target cells via its receptor PLXNB2 and translocates to the cytoplasm or nucleus. Under stress conditions, localizes to the cytoplasm and promotes the assembly of stress granules (SGs): specifically cleaves a subset of tRNAs within anticodon loops to produce tRNA-derived stress-induced fragments (tiRNAs), resulting in translation repression and inhibition of cell proliferation. tiRNas also prevent formation of apoptosome, thereby promoting cell survival. Preferentially cleaves RNAs between a pyrimidine and an adenosine residue, suggesting that it cleaves the anticodon loop of tRNA(Ala) (32-UUAGCAU-38) after positions 33 and 36. Cleaves a subset of tRNAs, including tRNA(Ala), tRNA(Glu), tRNA(Gly), tRNA(Lys), tRNA(Val), tRNA(His), tRNA(Asp) and tRNA(Sec). Under growth conditions and in differentiated cells, translocates to the nucleus and stimulates ribosomal RNA (rRNA) transcription, including that containing the initiation site sequences of 45S rRNA, thereby promoting cell growth and proliferation. Angiogenin induces vascularization of normal and malignant tissues via its ability to promote rRNA transcription. Involved in hematopoietic stem and progenitor cell (HSPC) growth and survival by promoting rRNA transcription in growth conditions and inhibiting translation in response to stress, respectively. Mediates the crosstalk between myeloid and intestinal epithelial cells to protect the intestinal epithelial barrier integrity: secreted by myeloid cells and promotes intestinal epithelial cells proliferation and survival. Also mediates osteoclast-endothelial cell crosstalk in growing bone: produced by osteoclasts and protects the neighboring vascular cells against senescence by promoting rRNA transcription. This is Angiogenin (ANG) from Pan troglodytes (Chimpanzee).